The primary structure comprises 503 residues: Na(+)-translocating NADH-quinone reductase subunit B (503 aa).

The next 5 membrane-spanning stretches (helical) occupy residues 55-75 (MMLV…NSGV), 94-114 (ISGF…FSIL), 120-140 (IFLP…VLFA), 161-181 (TLPP…GVVV), and 186-206 (FGGT…FLFF). Position 248 is an FMN phosphoryl threonine (Thr248). A run of 5 helical transmembrane segments spans residues 361-381 (TSTF…IASW), 387-407 (FGIG…LIVG), 417-437 (FFIP…LVFM), 452-472 (WIYG…NPAY), and 475-495 (GVML…YFAV).

Belongs to the NqrB/RnfD family. Composed of six subunits; NqrA, NqrB, NqrC, NqrD, NqrE and NqrF. FMN serves as cofactor.

It is found in the cell inner membrane. The enzyme catalyses a ubiquinone + n Na(+)(in) + NADH + H(+) = a ubiquinol + n Na(+)(out) + NAD(+). NQR complex catalyzes the reduction of ubiquinone-1 to ubiquinol by two successive reactions, coupled with the transport of Na(+) ions from the cytoplasm to the periplasm. NqrA to NqrE are probably involved in the second step, the conversion of ubisemiquinone to ubiquinol. The chain is Na(+)-translocating NADH-quinone reductase subunit B from Chlamydia caviae (strain ATCC VR-813 / DSM 19441 / 03DC25 / GPIC) (Chlamydophila caviae).